Here is a 306-residue protein sequence, read N- to C-terminus: Porphobilinogen deaminase (306 aa).

Cys239 carries the post-translational modification S-(dipyrrolylmethanemethyl)cysteine.

Belongs to the HMBS family. As to quaternary structure, monomer. Dipyrromethane serves as cofactor.

The enzyme catalyses 4 porphobilinogen + H2O = hydroxymethylbilane + 4 NH4(+). Its pathway is porphyrin-containing compound metabolism; protoporphyrin-IX biosynthesis; coproporphyrinogen-III from 5-aminolevulinate: step 2/4. Its function is as follows. Tetrapolymerization of the monopyrrole PBG into the hydroxymethylbilane pre-uroporphyrinogen in several discrete steps. The polypeptide is Porphobilinogen deaminase (Helicobacter pylori (strain P12)).